The chain runs to 296 residues: 4-diphosphocytidyl-2-C-methyl-D-erythritol kinase (296 aa).

Residue Lys13 is part of the active site. 98-108 (PVAAGIGGGSA) is a binding site for ATP. Asp140 is an active-site residue.

This sequence belongs to the GHMP kinase family. IspE subfamily.

The catalysed reaction is 4-CDP-2-C-methyl-D-erythritol + ATP = 4-CDP-2-C-methyl-D-erythritol 2-phosphate + ADP + H(+). It functions in the pathway isoprenoid biosynthesis; isopentenyl diphosphate biosynthesis via DXP pathway; isopentenyl diphosphate from 1-deoxy-D-xylulose 5-phosphate: step 3/6. Catalyzes the phosphorylation of the position 2 hydroxy group of 4-diphosphocytidyl-2C-methyl-D-erythritol. This Rhodopseudomonas palustris (strain HaA2) protein is 4-diphosphocytidyl-2-C-methyl-D-erythritol kinase.